Reading from the N-terminus, the 416-residue chain is Formyl-CoA:oxalate CoA-transferase (416 aa).

CoA-binding positions include glutamine 17–serine 18, arginine 38, leucine 72–lysine 75, asparagine 96–histidine 98, histidine 104, and lysine 137–glutamate 140. Aspartate 169 serves as the catalytic Nucleophile. Glycine 248–glutamine 250 contributes to the substrate binding site. Position 273-275 (glutamine 273–glutamine 275) interacts with CoA.

This sequence belongs to the CoA-transferase III family. Frc subfamily. As to quaternary structure, homodimer.

The enzyme catalyses formyl-CoA + oxalate = oxalyl-CoA + formate. It participates in metabolic intermediate degradation; oxalate degradation; CO(2) and formate from oxalate: step 1/2. Functionally, involved in the catabolism of oxalate and in the adapatation to low pH via the induction of the oxalate-dependent acid tolerance response (ATR). Catalyzes the transfer of the CoA moiety from formyl-CoA to oxalate. This Shigella sonnei (strain Ss046) protein is Formyl-CoA:oxalate CoA-transferase.